A 281-amino-acid polypeptide reads, in one-letter code: Ribosomal RNA small subunit methyltransferase A (281 aa).

S-adenosyl-L-methionine-binding residues include asparagine 36, leucine 38, glycine 63, glutamate 84, aspartate 109, and asparagine 127.

The protein belongs to the class I-like SAM-binding methyltransferase superfamily. rRNA adenine N(6)-methyltransferase family. RsmA subfamily.

The protein resides in the cytoplasm. The catalysed reaction is adenosine(1518)/adenosine(1519) in 16S rRNA + 4 S-adenosyl-L-methionine = N(6)-dimethyladenosine(1518)/N(6)-dimethyladenosine(1519) in 16S rRNA + 4 S-adenosyl-L-homocysteine + 4 H(+). Functionally, specifically dimethylates two adjacent adenosines (A1518 and A1519) in the loop of a conserved hairpin near the 3'-end of 16S rRNA in the 30S particle. May play a critical role in biogenesis of 30S subunits. This Borrelia garinii subsp. bavariensis (strain ATCC BAA-2496 / DSM 23469 / PBi) (Borreliella bavariensis) protein is Ribosomal RNA small subunit methyltransferase A.